Reading from the N-terminus, the 90-residue chain is Putative membrane protein insertion efficiency factor (90 aa).

The protein belongs to the UPF0161 family.

Its subcellular location is the cell membrane. Functionally, could be involved in insertion of integral membrane proteins into the membrane. This Lactococcus lactis subsp. cremoris (strain MG1363) protein is Putative membrane protein insertion efficiency factor.